The following is a 385-amino-acid chain: S-adenosylmethionine synthase (385 aa).

His-16 is a binding site for ATP. Asp-18 is a binding site for Mg(2+). Glu-44 serves as a coordination point for K(+). L-methionine is bound by residues Glu-57 and Gln-100. Positions 100 to 110 (QSPDINQGVDR) are flexible loop. ATP contacts are provided by residues 164-166 (DGK), 230-231 (KF), Asp-239, 245-246 (RK), Ala-262, and Lys-266. Asp-239 is a binding site for L-methionine. Lys-270 provides a ligand contact to L-methionine.

This sequence belongs to the AdoMet synthase family. In terms of assembly, homotetramer; dimer of dimers. The cofactor is Mg(2+). It depends on K(+) as a cofactor.

It localises to the cytoplasm. It catalyses the reaction L-methionine + ATP + H2O = S-adenosyl-L-methionine + phosphate + diphosphate. The protein operates within amino-acid biosynthesis; S-adenosyl-L-methionine biosynthesis; S-adenosyl-L-methionine from L-methionine: step 1/1. Its function is as follows. Catalyzes the formation of S-adenosylmethionine (AdoMet) from methionine and ATP. The overall synthetic reaction is composed of two sequential steps, AdoMet formation and the subsequent tripolyphosphate hydrolysis which occurs prior to release of AdoMet from the enzyme. This Helicobacter pylori (strain G27) protein is S-adenosylmethionine synthase.